A 283-amino-acid chain; its full sequence is Thymidylate synthase (283 aa).

Arg22 provides a ligand contact to dUMP. Residue Cys160 is the Nucleophile of the active site. DUMP is bound by residues 180 to 183, Asn191, and 221 to 223; these read RSCD and HIY. Asp183 contacts (6R)-5,10-methylene-5,6,7,8-tetrahydrofolate. Residue Ser282 participates in (6R)-5,10-methylene-5,6,7,8-tetrahydrofolate binding.

This sequence belongs to the thymidylate synthase family. Bacterial-type ThyA subfamily. Homodimer.

The protein resides in the cytoplasm. It carries out the reaction dUMP + (6R)-5,10-methylene-5,6,7,8-tetrahydrofolate = 7,8-dihydrofolate + dTMP. Its pathway is pyrimidine metabolism; dTTP biosynthesis. In terms of biological role, catalyzes the reductive methylation of 2'-deoxyuridine-5'-monophosphate (dUMP) to 2'-deoxythymidine-5'-monophosphate (dTMP) while utilizing 5,10-methylenetetrahydrofolate (mTHF) as the methyl donor and reductant in the reaction, yielding dihydrofolate (DHF) as a by-product. This enzymatic reaction provides an intracellular de novo source of dTMP, an essential precursor for DNA biosynthesis. This is Thymidylate synthase from Vibrio parahaemolyticus serotype O3:K6 (strain RIMD 2210633).